An 86-amino-acid chain; its full sequence is Neurotoxin 3FTx-LT (86 aa).

A signal peptide spans Met-1 to Thr-21. Cystine bridges form between Cys-24–Cys-45, Cys-27–Cys-32, Cys-38–Cys-63, Cys-67–Cys-78, and Cys-79–Cys-84.

In terms of tissue distribution, expressed by the venom gland.

The protein resides in the secreted. In terms of biological role, binds with low affinity to muscular (alpha-1-beta-1-delta-epsilon/CHRNA1-CHRNB1-CHRND-CHRNE) and very low affinity to neuronal (alpha-7/CHRNA7) nicotinic acetylcholine receptor (nAChR). In Bungarus fasciatus (Banded krait), this protein is Neurotoxin 3FTx-LT.